Consider the following 638-residue polypeptide: Probable potassium transport system protein Kup (638 aa).

The next 12 membrane-spanning stretches (helical) occupy residues leucine 25–leucine 45, valine 65–valine 85, alanine 114–isoleucine 134, proline 152–isoleucine 172, phenylalanine 184–valine 204, leucine 226–leucine 246, alanine 262–isoleucine 282, proline 291–alanine 311, isoleucine 352–phenylalanine 372, tyrosine 382–valine 402, leucine 410–asparagine 430, and valine 434–threonine 454.

The protein belongs to the HAK/KUP transporter (TC 2.A.72) family.

It localises to the cell inner membrane. The catalysed reaction is K(+)(in) + H(+)(in) = K(+)(out) + H(+)(out). In terms of biological role, transport of potassium into the cell. Likely operates as a K(+):H(+) symporter. The protein is Probable potassium transport system protein Kup of Burkholderia cenocepacia (strain HI2424).